We begin with the raw amino-acid sequence, 368 residues long: Phosphate acyltransferase (368 aa).

The segment at 334 to 368 (AAPLGESGRDANGAGQASPSAGQPAEPSAALSSKT) is disordered.

It belongs to the PlsX family. As to quaternary structure, homodimer. Probably interacts with PlsY.

The protein localises to the cytoplasm. It carries out the reaction a fatty acyl-[ACP] + phosphate = an acyl phosphate + holo-[ACP]. It functions in the pathway lipid metabolism; phospholipid metabolism. Catalyzes the reversible formation of acyl-phosphate (acyl-PO(4)) from acyl-[acyl-carrier-protein] (acyl-ACP). This enzyme utilizes acyl-ACP as fatty acyl donor, but not acyl-CoA. This Burkholderia pseudomallei (strain 1106a) protein is Phosphate acyltransferase.